Consider the following 118-residue polypeptide: Large ribosomal subunit protein bL19 (118 aa).

Belongs to the bacterial ribosomal protein bL19 family.

Functionally, this protein is located at the 30S-50S ribosomal subunit interface and may play a role in the structure and function of the aminoacyl-tRNA binding site. The chain is Large ribosomal subunit protein bL19 from Helicobacter pylori (strain G27).